The sequence spans 279 residues: Ribonuclease Z (279 aa).

7 residues coordinate Zn(2+): histidine 61, histidine 63, aspartate 65, histidine 66, histidine 153, aspartate 176, and histidine 240. Aspartate 65 acts as the Proton acceptor in catalysis.

This sequence belongs to the RNase Z family. As to quaternary structure, homodimer. It depends on Zn(2+) as a cofactor.

It carries out the reaction Endonucleolytic cleavage of RNA, removing extra 3' nucleotides from tRNA precursor, generating 3' termini of tRNAs. A 3'-hydroxy group is left at the tRNA terminus and a 5'-phosphoryl group is left at the trailer molecule.. Functionally, zinc phosphodiesterase, which displays some tRNA 3'-processing endonuclease activity. Probably involved in tRNA maturation, by removing a 3'-trailer from precursor tRNA. This Mycobacterium marinum (strain ATCC BAA-535 / M) protein is Ribonuclease Z.